A 92-amino-acid polypeptide reads, in one-letter code: C-C motif chemokine 3 (92 aa).

Positions 1-23 are cleaved as a signal peptide; the sequence is MQVSTAALAVLLCTMALCNQFSA. 2 cysteine pairs are disulfide-bonded: Cys33–Cys57 and Cys34–Cys73.

Belongs to the intercrine beta (chemokine CC) family. As to quaternary structure, self-associates. Also heterodimer of MIP-1-alpha(4-69) and MIP-1-beta(3-69). Interacts with CCR1.

It is found in the secreted. Monokine with inflammatory and chemokinetic properties. Binds to CCR1, CCR4 and CCR5. One of the major HIV-suppressive factors produced by CD8+ T-cells. Recombinant MIP-1-alpha induces a dose-dependent inhibition of different strains of HIV-1, HIV-2, and simian immunodeficiency virus (SIV). This chain is C-C motif chemokine 3 (CCL3), found in Pan troglodytes (Chimpanzee).